Here is a 552-residue protein sequence, read N- to C-terminus: CTP synthase (552 aa).

Residues 1-273 (MSESKKNPET…LTPIARRFNM (273 aa)) form an amidoligase domain region. Serine 21 contacts CTP. Serine 21 serves as a coordination point for UTP. ATP-binding positions include 22-27 (SLGKGI) and aspartate 79. Mg(2+) is bound by residues aspartate 79 and glutamate 147. CTP contacts are provided by residues 154-156 (DIE), 194-199 (KTKPTQ), and lysine 230. Residues 194–199 (KTKPTQ) and lysine 230 contribute to the UTP site. The region spanning 298-548 (TIAFVGKYLS…IQKSLELKKV (251 aa)) is the Glutamine amidotransferase type-1 domain. Glycine 359 contacts L-glutamine. Cysteine 386 serves as the catalytic Nucleophile; for glutamine hydrolysis. Residues 387 to 390 (LGMQ), glutamate 410, and arginine 478 each bind L-glutamine. Active-site residues include histidine 521 and glutamate 523.

It belongs to the CTP synthase family. In terms of assembly, homotetramer.

It carries out the reaction UTP + L-glutamine + ATP + H2O = CTP + L-glutamate + ADP + phosphate + 2 H(+). It catalyses the reaction L-glutamine + H2O = L-glutamate + NH4(+). The enzyme catalyses UTP + NH4(+) + ATP = CTP + ADP + phosphate + 2 H(+). The protein operates within pyrimidine metabolism; CTP biosynthesis via de novo pathway; CTP from UDP: step 2/2. Allosterically activated by GTP, when glutamine is the substrate; GTP has no effect on the reaction when ammonia is the substrate. The allosteric effector GTP functions by stabilizing the protein conformation that binds the tetrahedral intermediate(s) formed during glutamine hydrolysis. Inhibited by the product CTP, via allosteric rather than competitive inhibition. In terms of biological role, catalyzes the ATP-dependent amination of UTP to CTP with either L-glutamine or ammonia as the source of nitrogen. Regulates intracellular CTP levels through interactions with the four ribonucleotide triphosphates. The polypeptide is CTP synthase (Wolinella succinogenes (strain ATCC 29543 / DSM 1740 / CCUG 13145 / JCM 31913 / LMG 7466 / NCTC 11488 / FDC 602W) (Vibrio succinogenes)).